A 414-amino-acid polypeptide reads, in one-letter code: Imidazolonepropionase (414 aa).

A compositionally biased stretch (polar residues) spans 1 to 20; it reads MSHQLFRNTRIYSPMDSGQP. Positions 1 to 26 are disordered; sequence MSHQLFRNTRIYSPMDSGQPSAGKAQ. Fe(3+) contacts are provided by His81 and His83. 2 residues coordinate Zn(2+): His81 and His83. Positions 90, 153, and 186 each coordinate 4-imidazolone-5-propanoate. Position 153 (Tyr153) interacts with N-formimidoyl-L-glutamate. His251 contributes to the Fe(3+) binding site. A Zn(2+)-binding site is contributed by His251. Position 254 (Glu254) interacts with 4-imidazolone-5-propanoate. Asp325 contributes to the Fe(3+) binding site. Residue Asp325 coordinates Zn(2+). N-formimidoyl-L-glutamate is bound by residues Asn327 and Gly329. Ser330 contacts 4-imidazolone-5-propanoate.

Belongs to the metallo-dependent hydrolases superfamily. HutI family. The cofactor is Zn(2+). Requires Fe(3+) as cofactor.

The protein resides in the cytoplasm. It carries out the reaction 4-imidazolone-5-propanoate + H2O = N-formimidoyl-L-glutamate. It functions in the pathway amino-acid degradation; L-histidine degradation into L-glutamate; N-formimidoyl-L-glutamate from L-histidine: step 3/3. In terms of biological role, catalyzes the hydrolytic cleavage of the carbon-nitrogen bond in imidazolone-5-propanoate to yield N-formimidoyl-L-glutamate. It is the third step in the universal histidine degradation pathway. The sequence is that of Imidazolonepropionase from Desulfotalea psychrophila (strain LSv54 / DSM 12343).